Reading from the N-terminus, the 147-residue chain is Fluoride-specific ion channel FluC 1 (147 aa).

The next 4 helical transmembrane spans lie at 29–49 (YVYIFIGGALGALLRYLISFL), 61–81 (IANLTGAFVMGLLTALTIAFF), 90–110 (AITTGFLGALTTFSTFQLELI), and 118–138 (FITLLLYAVTSYVFGILLCYV). 2 residues coordinate Na(+): Gly97 and Thr100.

This sequence belongs to the fluoride channel Fluc/FEX (TC 1.A.43) family.

It is found in the cell membrane. It carries out the reaction fluoride(in) = fluoride(out). With respect to regulation, na(+) is not transported, but it plays an essential structural role and its presence is essential for fluoride channel function. In terms of biological role, fluoride-specific ion channel. Important for reducing fluoride concentration in the cell, thus reducing its toxicity. The protein is Fluoride-specific ion channel FluC 1 of Staphylococcus aureus (strain Mu50 / ATCC 700699).